A 328-amino-acid chain; its full sequence is C-type lectin domain family 11 member A (328 aa).

The signal sequence occupies residues 1-21 (MQAAWLLGALLVPHLLSFGHG). The segment at 58 to 111 (PTGVGNKDNLAENSEGKEVWEATETQGEEEEEETTTTPSSSPTPFPSPSPTSED) is disordered. In terms of domain architecture, C-type lectin spans 188–325 (LGHKCFLLSR…CERRLYFVCE (138 aa)). 2 disulfide bridges follow: C209–C324 and C301–C316.

O-glycosylated. Probably sulfated on the O-glycans.

Its subcellular location is the cytoplasm. It is found in the secreted. Functionally, promotes osteogenesis by stimulating the differentiation of mesenchymal progenitors into mature osteoblasts. Important for repair and maintenance of adult bone. The protein is C-type lectin domain family 11 member A (Clec11a) of Rattus norvegicus (Rat).